We begin with the raw amino-acid sequence, 130 residues long: Small ribosomal subunit protein uS9 (130 aa).

It belongs to the universal ribosomal protein uS9 family.

The protein is Small ribosomal subunit protein uS9 of Geotalea uraniireducens (strain Rf4) (Geobacter uraniireducens).